Consider the following 347-residue polypeptide: uncharacterized protein (347 aa).

Coiled coils occupy residues 148 to 201 and 261 to 298; these read DQQS…EKDG and LENL…DTFS. Residues 151 to 203 form a disordered region; sequence SISNLRKEEKEKQKENENENENENENENENEKENQELDKKVNQTNDNEKDGDE. Residues 155-167 show a composition bias toward basic and acidic residues; the sequence is LRKEEKEKQKENE. Acidic residues predominate over residues 168–178; it reads NENENENENEN. The span at 179 to 191 shows a compositional bias: basic and acidic residues; it reads ENEKENQELDKKV.

This is an uncharacterized protein from Dictyostelium discoideum (Social amoeba).